We begin with the raw amino-acid sequence, 514 residues long: 2,3-bisphosphoglycerate-independent phosphoglycerate mutase (514 aa).

Mn(2+) contacts are provided by Asp-14 and Ser-64. Catalysis depends on Ser-64, which acts as the Phosphoserine intermediate. Substrate is bound by residues His-125, 155–156, Arg-187, Arg-193, 263–266, and Lys-336; these read RD and RADR. Residues Asp-403, His-407, Asp-444, His-445, and His-463 each contribute to the Mn(2+) site.

Belongs to the BPG-independent phosphoglycerate mutase family. Monomer. Mn(2+) is required as a cofactor.

The enzyme catalyses (2R)-2-phosphoglycerate = (2R)-3-phosphoglycerate. It participates in carbohydrate degradation; glycolysis; pyruvate from D-glyceraldehyde 3-phosphate: step 3/5. In terms of biological role, catalyzes the interconversion of 2-phosphoglycerate and 3-phosphoglycerate. The protein is 2,3-bisphosphoglycerate-independent phosphoglycerate mutase of Shewanella sp. (strain ANA-3).